Here is a 492-residue protein sequence, read N- to C-terminus: Cell division protein FtsA (492 aa).

Disordered stretches follow at residues 288 to 307 and 429 to 458; these read GEET…DGHE and YTRT…KAPS. The segment covering 291-303 has biased composition (polar residues); it reads TPSQNVQIPTTGS. The span at 436 to 447 shows a compositional bias: low complexity; it reads SSPTPHIHSSPT.

Belongs to the FtsA/MreB family. In terms of assembly, self-interacts. Interacts with FtsZ.

It localises to the cell inner membrane. Cell division protein that is involved in the assembly of the Z ring. May serve as a membrane anchor for the Z ring. In Helicobacter pylori (strain ATCC 700392 / 26695) (Campylobacter pylori), this protein is Cell division protein FtsA.